We begin with the raw amino-acid sequence, 121 residues long: Small ribosomal subunit protein uS13 (121 aa).

The disordered stretch occupies residues 94–121; that stretch reads GLPMRGQRTRTNARTRKGPRKGAAALKK.

It belongs to the universal ribosomal protein uS13 family. In terms of assembly, part of the 30S ribosomal subunit. Forms a loose heterodimer with protein S19. Forms two bridges to the 50S subunit in the 70S ribosome.

In terms of biological role, located at the top of the head of the 30S subunit, it contacts several helices of the 16S rRNA. In the 70S ribosome it contacts the 23S rRNA (bridge B1a) and protein L5 of the 50S subunit (bridge B1b), connecting the 2 subunits; these bridges are implicated in subunit movement. Contacts the tRNAs in the A and P-sites. The chain is Small ribosomal subunit protein uS13 from Delftia acidovorans (strain DSM 14801 / SPH-1).